A 148-amino-acid polypeptide reads, in one-letter code: Low molecular weight protein-tyrosine-phosphatase Etp (148 aa).

The active-site Nucleophile is the cysteine 13. Residue arginine 19 is part of the active site. Aspartate 119 serves as the catalytic Proton donor.

The protein belongs to the low molecular weight phosphotyrosine protein phosphatase family.

The catalysed reaction is O-phospho-L-tyrosyl-[protein] + H2O = L-tyrosyl-[protein] + phosphate. Its function is as follows. Dephosphorylates etk. This is Low molecular weight protein-tyrosine-phosphatase Etp (etp) from Escherichia coli O157:H7.